A 308-amino-acid chain; its full sequence is D-alanine--D-alanine ligase (308 aa).

One can recognise an ATP-grasp domain in the interval 104 to 301; sequence KQIWQGSDLP…FDELCVAILE (198 aa). 130-185 provides a ligand contact to ATP; it reads IAELGLPVIIKPVHEGSSVGMSKVEKAEDFAAAIEKATQHDAVVMAEKWITGREFT. Mg(2+) contacts are provided by Asp-255, Glu-268, and Asn-270.

The protein belongs to the D-alanine--D-alanine ligase family. The cofactor is Mg(2+). Mn(2+) serves as cofactor.

The protein resides in the cytoplasm. It catalyses the reaction 2 D-alanine + ATP = D-alanyl-D-alanine + ADP + phosphate + H(+). It participates in cell wall biogenesis; peptidoglycan biosynthesis. Its function is as follows. Cell wall formation. The protein is D-alanine--D-alanine ligase of Acinetobacter baumannii (strain SDF).